We begin with the raw amino-acid sequence, 405 residues long: Lariat debranching enzyme (405 aa).

Positions 11, 13, 40, and 85 each coordinate a divalent metal cation. A lariat recognition loop region spans residues Ser125 to Arg159. 3 residues coordinate a divalent metal cation: His179, His231, and His233. The disordered stretch occupies residues His242–Gly277. Over residues Ile264 to Glu274 the composition is skewed to acidic residues. A Phosphoserine modification is found at Ser269.

The protein belongs to the lariat debranching enzyme family. Requires Fe(2+) as cofactor. Zn(2+) is required as a cofactor. Mn(2+) serves as cofactor.

It is found in the nucleus. The protein localises to the cytoplasm. Its activity is regulated as follows. Active in presence of diverse metals including Fe(2+), Zn(2+) and Mn(2+). Binds two metal cations in two adjacent alpha and beta metal-binding pockets. The activity is the highest with Fe(2+) bound to the 2 metal-binding sites. Activity is low with Zn(2+) and Mn(2+). Functionally, cleaves the 2'-5' phosphodiester linkage at the branch point of lariat intron pre-mRNAs after splicing and converts them into linear molecules that are subsequently degraded, thereby facilitating ribonucleotide turnover. It also participates in Ty1 retrovirus-like transposition via an RNA lariat intermediate in cDNA synthesis. This Saccharomyces cerevisiae (strain ATCC 204508 / S288c) (Baker's yeast) protein is Lariat debranching enzyme (DBR1).